Here is a 479-residue protein sequence, read N- to C-terminus: BURP domain-containing protein 4 (479 aa).

The N-terminal stretch at Met-1–Ala-46 is a signal peptide. Residues Arg-158 to Lys-177 form a disordered region. The BURP domain maps to Leu-254 to Asn-479. An N-linked (GlcNAc...) asparagine glycan is attached at Asn-445.

In terms of tissue distribution, expressed in stamen.

This is BURP domain-containing protein 4 (BURP4) from Oryza sativa subsp. japonica (Rice).